Here is a 123-residue protein sequence, read N- to C-terminus: Holo-[acyl-carrier-protein] synthase (123 aa).

Mg(2+) is bound by residues Asp-8 and Glu-50.

The protein belongs to the P-Pant transferase superfamily. AcpS family. The cofactor is Mg(2+).

The protein resides in the cytoplasm. The catalysed reaction is apo-[ACP] + CoA = holo-[ACP] + adenosine 3',5'-bisphosphate + H(+). Transfers the 4'-phosphopantetheine moiety from coenzyme A to a Ser of acyl-carrier-protein. In Kocuria rhizophila (strain ATCC 9341 / DSM 348 / NBRC 103217 / DC2201), this protein is Holo-[acyl-carrier-protein] synthase.